Reading from the N-terminus, the 335-residue chain is Biotin synthase (335 aa).

One can recognise a Radical SAM core domain in the interval 46 to 274; sequence YDIQLASLFS…ESKIRLSAGR (229 aa). The [4Fe-4S] cluster site is built by C61, C65, and C68. Residues C105, C137, C197, and R269 each contribute to the [2Fe-2S] cluster site.

Belongs to the radical SAM superfamily. Biotin synthase family. Homodimer. It depends on [4Fe-4S] cluster as a cofactor. Requires [2Fe-2S] cluster as cofactor.

The enzyme catalyses (4R,5S)-dethiobiotin + (sulfur carrier)-SH + 2 reduced [2Fe-2S]-[ferredoxin] + 2 S-adenosyl-L-methionine = (sulfur carrier)-H + biotin + 2 5'-deoxyadenosine + 2 L-methionine + 2 oxidized [2Fe-2S]-[ferredoxin]. It participates in cofactor biosynthesis; biotin biosynthesis; biotin from 7,8-diaminononanoate: step 2/2. Functionally, catalyzes the conversion of dethiobiotin (DTB) to biotin by the insertion of a sulfur atom into dethiobiotin via a radical-based mechanism. This is Biotin synthase from Prochlorococcus marinus (strain MIT 9301).